Here is a 162-residue protein sequence, read N- to C-terminus: Ribosome maturation factor RimP (162 aa).

The protein belongs to the RimP family.

It is found in the cytoplasm. Functionally, required for maturation of 30S ribosomal subunits. This Cupriavidus metallidurans (strain ATCC 43123 / DSM 2839 / NBRC 102507 / CH34) (Ralstonia metallidurans) protein is Ribosome maturation factor RimP.